Reading from the N-terminus, the 102-residue chain is Large ribosomal subunit protein bL21 (102 aa).

Belongs to the bacterial ribosomal protein bL21 family. Part of the 50S ribosomal subunit. Contacts protein L20.

Functionally, this protein binds to 23S rRNA in the presence of protein L20. This Onion yellows phytoplasma (strain OY-M) protein is Large ribosomal subunit protein bL21.